Reading from the N-terminus, the 552-residue chain is Cytochrome P450 monooxyhenase eriI (552 aa).

Residues 9–26 form a helical membrane-spanning segment; sequence FALKASAAVAVLLLAAWV. Asn-50 and Asn-447 each carry an N-linked (GlcNAc...) asparagine glycan. Cys-495 serves as a coordination point for heme.

It belongs to the cytochrome P450 family. Heme is required as a cofactor.

It localises to the membrane. It carries out the reaction (-)-cyatha-3,12-diene + reduced [NADPH--hemoprotein reductase] + O2 = erinacol + oxidized [NADPH--hemoprotein reductase] + H2O + H(+). It functions in the pathway secondary metabolite biosynthesis. Cytochrome P450 monooxygenase; part of the gene cluster that mediates the biosynthesis of erinacines, cyathane-xylosides that show unique biological activities, including leishmanicidal activity, stimulating activity for nerve growth-factor synthesis, and agonistic activity toward the kappa opioid receptor. Within the pathway, eriI hydroxylates cyatha-3,12-diene at C-14 of the seven-membered ring to yield erinacol. The first step of the erinacines biosynthesis pathway is catalyzed by the geranylgeranyl diphosphate (GGPP) synthase eriE via conversion of farnesyl pyrophosphate and isopentyl pyrophosphate into geranylgeranyl pyrophosphate (GGPP). GGPP is then substrate of the diterpene cyclase eriG for the production of cyatha-3,12-diene. The cytochrome P450 monooxygenase eriI then hydroxylates cyatha-3,12-diene at C-14 of the seven-membered ring to produce erinacol, which is further hydroxylated at C-15 by the cytochrome P450 monooxygenase eriC to yield cyathadiol. The cytochrome P450 monooxygenase eriA then catalyzes C-11 hydroxylation in the presence of the short chain dehydrogenase/reductase (SDR) eriH, which leads to the production of cyathatriol. The acetyltransferase eriL converts cyathatriol into 11-O-acetyl-cyathatriol. The SDR eriH catalyzes further oxidation of 11-O-acetyl-cyathatriol into 1-O-acetylcyathin A3. Finally, the glycosyl transferase eriJ tranfers xylose from UDP-xylose onto C-14 of 11-O-acetyl-cyathatriol to form eracine Q. EriJ is also able to convert 11-O-acetyl-cyathatriol to eracine Q2 by using UDP-D-glucose as cosubstrate, but at a lower rate. In terms of biological role, cytochrome P450 monooxygenase; part of the gene cluster that mediates the biosynthesis of erinacines, cyathane-xylosides that show unique biological activities, including leishmanicidal activity, stimulating activity for nerve growth-factor synthesis, and agonistic activity toward the kappa opioid receptor. The geranylgeranyl diphosphate (GGPP) synthase eriE catalyzes the first step in erinacines biosynthesis via conversion of farnesyl pyrophosphate and isopentyl pyrophosphate into geranylgeranyl pyrophosphate (GGPP). GGPP is then substrate of the diterpene cyclase eriG for the production of cyatha-3,12-diene. EriG is unable to use geranyl diphosphate (GPP) or farnesyl diphosphate (FPP) as substrates. The cytochrome P450 monooxygenase eriI then hydroxylates cyatha-3,12-diene at C-14 of the seven-membered ring to produce erinacol, which is further hydroxylated at C-15 by the cytochrome P450 monooxygenase eriC to yield cyathadiol. The cytochrome P450 monooxygenase eriA then catalyzes C-11 hydroxylation in the presence of the short chain dehydrogenase/reductase (SDR) eriH, which leads to the production of cyathatriol. The acetyltransferase eriL converts cyathatriol into 11-O-acetyl-cyathatriol. The SDR eriH catalyzes further oxidation of 11-O-acetyl-cyathatriol into 1-O-acetylcyathin A3. Finally, the glycosyl transferase eriJ tranfers xylose from UDP-xylose onto C-14 of 11-O-acetyl-cyathatriol to form eracine Q. EriJ is also able to convert 11-O-acetyl-cyathatriol to eracine Q2 by using UDP-D-glucose as cosubstrate, but at a lower rate. In the absence of eriL and eriJ, the SDR eriH is able to convert cyathatriol to cyathin A3; this is likely a switching mechanism in the biosynthesis of cyathins (C-14 ketogroup)and erinacines (C-14 glycosylated group). The roles of the SDR eriB, the polyprenyl transferase eriF and the dehydrogenase eriK have still to be identified. The protein is Cytochrome P450 monooxyhenase eriI of Hericium erinaceus (Lion's mane mushroom).